Here is a 36-residue protein sequence, read N- to C-terminus: Photosystem I reaction center subunit VIII (36 aa).

A helical membrane pass occupies residues 7–29 (PSILVPLVGILLPAVTMASLFLY).

This sequence belongs to the PsaI family.

The protein resides in the plastid. It localises to the chloroplast thylakoid membrane. Its function is as follows. May help in the organization of the PsaL subunit. The chain is Photosystem I reaction center subunit VIII from Adiantum capillus-veneris (Maidenhair fern).